The sequence spans 622 residues: Condensin-2 complex subunit H2 (622 aa).

Phosphothreonine is present on Thr19. A phosphoserine mark is found at Ser95, Ser199, Ser223, and Ser227. The disordered stretch occupies residues 207-354 (WNPKEPGRAE…PGQKRKRKGA (148 aa)). The segment covering 262 to 273 (AAEPPEASAPEV) has biased composition (low complexity). Ser282 is modified (phosphoserine). Over residues 294–312 (TLRERKEAPEPASRLKDTP) the composition is skewed to basic and acidic residues.

It belongs to the CND2 H2 (condensin-2 subunit 2) family. Component of the condensin-2 complex, which contains the SMC2 and SMC4 heterodimer, and three non SMC subunits, NCAPG2, NCAPH2 and NCAPD3 that probably regulate the complex.

Its subcellular location is the nucleus. Its function is as follows. Regulatory subunit of the condensin-2 complex, a complex that seems to provide chromosomes with an additional level of organization and rigidity and in establishing mitotic chromosome architecture. May promote the resolution of double-strand DNA catenanes (intertwines) between sister chromatids. Condensin-mediated compaction likely increases tension in catenated sister chromatids, providing directionality for type II topoisomerase-mediated strand exchanges toward chromatid decatenation. Required for decatenation of chromatin bridges at anaphase. Early in neurogenesis, may play an essential role to ensure accurate mitotic chromosome condensation in neuron stem cells, ultimately affecting neuron pool and cortex size. Seems to have lineage-specific role in T-cell development. The sequence is that of Condensin-2 complex subunit H2 (NCAPH2) from Bos taurus (Bovine).